The following is a 530-amino-acid chain: Glucose-6-phosphate isomerase (530 aa).

Residue Glu-322 is the Proton donor of the active site. Residues His-351 and Lys-455 contribute to the active site.

Belongs to the GPI family.

It is found in the cytoplasm. It catalyses the reaction alpha-D-glucose 6-phosphate = beta-D-fructose 6-phosphate. It participates in carbohydrate biosynthesis; gluconeogenesis. Its pathway is carbohydrate degradation; glycolysis; D-glyceraldehyde 3-phosphate and glycerone phosphate from D-glucose: step 2/4. Its function is as follows. Catalyzes the reversible isomerization of glucose-6-phosphate to fructose-6-phosphate. The chain is Glucose-6-phosphate isomerase from Citrifermentans bemidjiense (strain ATCC BAA-1014 / DSM 16622 / JCM 12645 / Bem) (Geobacter bemidjiensis).